A 343-amino-acid chain; its full sequence is Methionine import ATP-binding protein MetN 1 (343 aa).

In terms of domain architecture, ABC transporter spans 2–241 (IKLSNITKVF…PKTPLAQKFI (240 aa)). Residue 38–45 (GASGAGKS) participates in ATP binding.

It belongs to the ABC transporter superfamily. Methionine importer (TC 3.A.1.24) family. As to quaternary structure, the complex is composed of two ATP-binding proteins (MetN), two transmembrane proteins (MetI) and a solute-binding protein (MetQ).

The protein resides in the cell inner membrane. It catalyses the reaction L-methionine(out) + ATP + H2O = L-methionine(in) + ADP + phosphate + H(+). The enzyme catalyses D-methionine(out) + ATP + H2O = D-methionine(in) + ADP + phosphate + H(+). In terms of biological role, part of the ABC transporter complex MetNIQ involved in methionine import. Responsible for energy coupling to the transport system. The protein is Methionine import ATP-binding protein MetN 1 of Salmonella paratyphi A (strain ATCC 9150 / SARB42).